The following is a 662-amino-acid chain: Protein Aster-C (662 aa).

Residues 1-34 (MEGAPTVRQVMNEGDSSLATDLQEDVEENPSPTV) form a disordered region. The region spanning 69-136 (EEYRRQFTHL…KNITFMTKEK (68 aa)) is the GRAM domain. 2 disordered regions span residues 212-237 (SIEDVQPRSPGRSSLDDSGERDEKLS) and 249-284 (RVSETESFDGNSSKGGLGKEESQNEKQTKKSLLPTL). Residues 265-276 (LGKEESQNEKQT) show a composition bias toward basic and acidic residues. The 172-residue stretch at 326–497 (HGRLFINRIF…DLLIEESVLN (172 aa)) folds into the VASt domain. The chain crosses the membrane as a helical span at residues 557–577 (LIVVMSIFVLLLVLLNVTLFL).

It is found in the endoplasmic reticulum membrane. The protein resides in the cell membrane. In terms of biological role, cholesterol transporter that mediates non-vesicular transport of cholesterol from the plasma membrane (PM) to the endoplasmic reticulum (ER). Contains unique domains for binding cholesterol and the PM, thereby serving as a molecular bridge for the transfer of cholesterol from the PM to the ER. Plays a crucial role in cholesterol homeostasis and has the unique ability to localize to the PM based on the level of membrane cholesterol. In lipid-poor conditions localizes to the ER membrane and in response to excess cholesterol in the PM is recruited to the endoplasmic reticulum-plasma membrane contact sites (EPCS) which is mediated by the GRAM domain. At the EPCS, the sterol-binding VASt/ASTER domain binds to the cholesterol in the PM and facilitates its transfer from the PM to ER. The sequence is that of Protein Aster-C (GRAMD1C) from Homo sapiens (Human).